Reading from the N-terminus, the 257-residue chain is Imidazole glycerol phosphate synthase subunit HisF (257 aa).

Active-site residues include Asp-12 and Asp-131.

It belongs to the HisA/HisF family. As to quaternary structure, heterodimer of HisH and HisF.

Its subcellular location is the cytoplasm. The catalysed reaction is 5-[(5-phospho-1-deoxy-D-ribulos-1-ylimino)methylamino]-1-(5-phospho-beta-D-ribosyl)imidazole-4-carboxamide + L-glutamine = D-erythro-1-(imidazol-4-yl)glycerol 3-phosphate + 5-amino-1-(5-phospho-beta-D-ribosyl)imidazole-4-carboxamide + L-glutamate + H(+). It functions in the pathway amino-acid biosynthesis; L-histidine biosynthesis; L-histidine from 5-phospho-alpha-D-ribose 1-diphosphate: step 5/9. IGPS catalyzes the conversion of PRFAR and glutamine to IGP, AICAR and glutamate. The HisF subunit catalyzes the cyclization activity that produces IGP and AICAR from PRFAR using the ammonia provided by the HisH subunit. The polypeptide is Imidazole glycerol phosphate synthase subunit HisF (Rhodococcus erythropolis (strain PR4 / NBRC 100887)).